The following is a 294-amino-acid chain: 4-hydroxy-tetrahydrodipicolinate synthase (294 aa).

T47 lines the pyruvate pocket. Y135 (proton donor/acceptor) is an active-site residue. K163 acts as the Schiff-base intermediate with substrate in catalysis. Residue T205 coordinates pyruvate.

The protein belongs to the DapA family. In terms of assembly, homotetramer; dimer of dimers.

It localises to the cytoplasm. The catalysed reaction is L-aspartate 4-semialdehyde + pyruvate = (2S,4S)-4-hydroxy-2,3,4,5-tetrahydrodipicolinate + H2O + H(+). It participates in amino-acid biosynthesis; L-lysine biosynthesis via DAP pathway; (S)-tetrahydrodipicolinate from L-aspartate: step 3/4. Catalyzes the condensation of (S)-aspartate-beta-semialdehyde [(S)-ASA] and pyruvate to 4-hydroxy-tetrahydrodipicolinate (HTPA). This Rickettsia africae (strain ESF-5) protein is 4-hydroxy-tetrahydrodipicolinate synthase.